A 418-amino-acid chain; its full sequence is Tyrosine--tRNA ligase (418 aa).

Tyr-34 is an L-tyrosine binding site. The 'HIGH' region signature appears at 39-48 (PTADSLHLGH). The L-tyrosine site is built by Tyr-169 and Gln-173. The short motif at 229 to 233 (KFGKS) is the 'KMSKS' region element. Lys-232 is an ATP binding site. One can recognise an S4 RNA-binding domain in the interval 352–418 (NNIVELLVSS…GKKKYFVLTY (67 aa)).

This sequence belongs to the class-I aminoacyl-tRNA synthetase family. TyrS type 1 subfamily. In terms of assembly, homodimer.

It localises to the cytoplasm. The enzyme catalyses tRNA(Tyr) + L-tyrosine + ATP = L-tyrosyl-tRNA(Tyr) + AMP + diphosphate + H(+). Catalyzes the attachment of tyrosine to tRNA(Tyr) in a two-step reaction: tyrosine is first activated by ATP to form Tyr-AMP and then transferred to the acceptor end of tRNA(Tyr). This chain is Tyrosine--tRNA ligase, found in Streptococcus pneumoniae (strain Taiwan19F-14).